We begin with the raw amino-acid sequence, 271 residues long: Intercellular adhesion molecule 4 (271 aa).

An N-terminal signal peptide occupies residues 1-22 (MGSLFPLSLLFFLAAAYPGVGS). Topologically, residues 23-240 (ALGRRTKRAQ…MLAWSPAPTA (218 aa)) are extracellular. 2 consecutive Ig-like C2-type domains span residues 62–124 (GKSV…TRWA) and 146–217 (GRKY…LNLD). Asparagine 68, asparagine 78, asparagine 190, and asparagine 223 each carry an N-linked (GlcNAc...) asparagine glycan. Cystine bridges form between cysteine 69/cysteine 113, cysteine 69/cysteine 117, cysteine 73/cysteine 117, and cysteine 153/cysteine 210. A helical transmembrane segment spans residues 241-261 (LASGSIAALVGILLTVGAAYL). The Cytoplasmic portion of the chain corresponds to 262 to 271 (CKCLAMKSQA).

This sequence belongs to the immunoglobulin superfamily. ICAM family. In terms of processing, N- and O-glycosylated. In terms of tissue distribution, erythrocytes.

It is found in the cell membrane. The protein resides in the secreted. ICAM proteins are ligands for the leukocyte adhesion protein LFA-1 (integrin alpha-L/beta-2). ICAM4 is also a ligand for alpha-4/beta-1 and alpha-V integrins. This is Intercellular adhesion molecule 4 (ICAM4) from Homo sapiens (Human).